The chain runs to 263 residues: uncharacterized protein (263 aa).

Residues 1-22 (MEYLKRLALLISVIILTIFIMG) form the signal peptide. The N-palmitoyl cysteine moiety is linked to residue cysteine 23. Cysteine 23 is lipidated: S-diacylglycerol cysteine.

This sequence belongs to the staphylococcal tandem lipoprotein family.

It is found in the cell membrane. This is an uncharacterized protein from Staphylococcus aureus (strain COL).